We begin with the raw amino-acid sequence, 214 residues long: Probable transaldolase (214 aa).

The active-site Schiff-base intermediate with substrate is the lysine 83.

The protein belongs to the transaldolase family. Type 3B subfamily.

It is found in the cytoplasm. It carries out the reaction D-sedoheptulose 7-phosphate + D-glyceraldehyde 3-phosphate = D-erythrose 4-phosphate + beta-D-fructose 6-phosphate. The protein operates within carbohydrate degradation; pentose phosphate pathway; D-glyceraldehyde 3-phosphate and beta-D-fructose 6-phosphate from D-ribose 5-phosphate and D-xylulose 5-phosphate (non-oxidative stage): step 2/3. Functionally, transaldolase is important for the balance of metabolites in the pentose-phosphate pathway. The sequence is that of Probable transaldolase from Streptococcus equi subsp. zooepidemicus (strain MGCS10565).